The following is a 140-amino-acid chain: Cystatin-C (140 aa).

An N-terminal signal peptide occupies residues 1–20 (MASPLRSLMLLLAVLAVAWA). The Secondary area of contact signature appears at 75-79 (QLVAG). Intrachain disulfides connect cysteine 93-cysteine 103 and cysteine 117-cysteine 137. Asparagine 99 carries an N-linked (GlcNAc...) asparagine glycan.

It belongs to the cystatin family.

It is found in the secreted. Functionally, as an inhibitor of cysteine proteinases, this protein is thought to serve an important physiological role as a local regulator of this enzyme activity. Known to inhibit cathepsin B, H, and L. This chain is Cystatin-C (Cst3), found in Rattus norvegicus (Rat).